A 338-amino-acid polypeptide reads, in one-letter code: Methionine import ATP-binding protein MetN 1 (338 aa).

The ABC transporter domain occupies 2 to 241; it reads IELHQVSKSF…AKHATTKRFV (240 aa). 38-45 is a binding site for ATP; that stretch reads GYSGAGKS.

The protein belongs to the ABC transporter superfamily. Methionine importer (TC 3.A.1.24) family. In terms of assembly, the complex is composed of two ATP-binding proteins (MetN), two transmembrane proteins (MetI) and a solute-binding protein (MetQ).

Its subcellular location is the cell membrane. The enzyme catalyses L-methionine(out) + ATP + H2O = L-methionine(in) + ADP + phosphate + H(+). It catalyses the reaction D-methionine(out) + ATP + H2O = D-methionine(in) + ADP + phosphate + H(+). Part of the ABC transporter complex MetNIQ involved in methionine import. Responsible for energy coupling to the transport system. The chain is Methionine import ATP-binding protein MetN 1 from Listeria monocytogenes serotype 4b (strain F2365).